The sequence spans 204 residues: MAEEVEEERLKYLDFVRAAGVYAVDSFSTLYLYAKDISGPLKPGVDTIENVVKTVVTPVYYIPLEAVKFVDKTVDVSVTSLDGVVPPVIKQVSAQTYSVAQDAPRIVLDVASSVFNTGVQEGAKALYANLEPKAEQYAVITWRALNKLPLVPQVANVVVPTAVYFSEKYNDVVRGTTEQGYRVSSYLPLLPTEKITKVFGDEAS.

This sequence belongs to the REF/SRPP family. Auto-assembles in solution into stable nanomultimers of a globular nature. Not glycosylated. In terms of processing, the N-terminus is blocked. Post-translationally, consistent shifts of about 266 Da observed by MS in various forms of the intact protein suggest the addition of stearolyl groups. Highly expressed in the specialized vessel laticifers, but localized only in the laticifer layers in the conducting phloem. Also detected in leaves.

The protein localises to the cytoplasm. Functionally, involved in the biosynthesis of rubber, an isoprenoid polymer (cis-1,4-polyisoprene). The chain is Small rubber particle protein from Hevea brasiliensis (Para rubber tree).